The following is a 411-amino-acid chain: Glucose-1-phosphate adenylyltransferase (411 aa).

Residues Gly-162, 177–178 (EK), and Ser-195 each bind alpha-D-glucose 1-phosphate.

It belongs to the bacterial/plant glucose-1-phosphate adenylyltransferase family. As to quaternary structure, homotetramer.

The enzyme catalyses alpha-D-glucose 1-phosphate + ATP + H(+) = ADP-alpha-D-glucose + diphosphate. The protein operates within glycan biosynthesis; glycogen biosynthesis. In terms of biological role, involved in the biosynthesis of ADP-glucose, a building block required for the elongation reactions to produce glycogen. Catalyzes the reaction between ATP and alpha-D-glucose 1-phosphate (G1P) to produce pyrophosphate and ADP-Glc. The polypeptide is Glucose-1-phosphate adenylyltransferase (Thermodesulfovibrio yellowstonii (strain ATCC 51303 / DSM 11347 / YP87)).